Consider the following 176-residue polypeptide: MTGADDPARPAVGPQSFRDAMAQLASPVTVVTVLDAAGRRHGFTAGSVVSVSLDPPLVMVGIALTSSCHTAMAAAAEFCVSILGEDQRAVAKRCATHGADRFAGGEFAAWDGTGVPYLPDAKVVLRCRTTDVVRAGDHDLVLGTPVEIRTGDPAKPPLLWYRRDFHTPTPTTPALA.

Its function is as follows. Provides the reduced form of flavin mononucleotide for the PIIA synthase reaction. The polypeptide is NADH:riboflavin 5'-phosphate oxidoreductase (snaC) (Streptomyces pristinaespiralis).